The following is a 426-amino-acid chain: Mannose-6-phosphate isomerase (426 aa).

Positions 112, 114, 139, and 277 each coordinate Zn(2+). Arginine 296 is an active-site residue.

It belongs to the mannose-6-phosphate isomerase type 1 family. It depends on Zn(2+) as a cofactor.

It localises to the cytoplasm. The catalysed reaction is D-mannose 6-phosphate = D-fructose 6-phosphate. Its pathway is nucleotide-sugar biosynthesis; GDP-alpha-D-mannose biosynthesis; alpha-D-mannose 1-phosphate from D-fructose 6-phosphate: step 1/2. Its function is as follows. Involved in the synthesis of the GDP-mannose and dolichol-phosphate-mannose required for a number of critical mannosyl transfer reactions. The sequence is that of Mannose-6-phosphate isomerase (PMI40) from Ogataea parapolymorpha (strain ATCC 26012 / BCRC 20466 / JCM 22074 / NRRL Y-7560 / DL-1) (Yeast).